A 388-amino-acid polypeptide reads, in one-letter code: Staphopain A (388 aa).

An N-terminal signal peptide occupies residues 1–25; it reads MKRNFPKLIALSLIFSLSITPIANA. Positions 26 to 214 are excised as a propeptide; the sequence is ESNSNIKAKD…TSQFKSNNYT (189 aa). Residues Cys-238, His-334, and Asn-355 contribute to the active site.

This sequence belongs to the peptidase C47 family. In terms of assembly, in the cytoplasm, prematurely activated/folded ScpA forms a stable non-covalent complex with ScpB. Post-translationally, cleavage leads to the activation of ScpA probably by an auto-catalytic manner.

The protein resides in the secreted. The enzyme catalyses Broad endopeptidase action on proteins including elastin, but rather limited hydrolysis of small-molecule substrates. Assays are conveniently made with hemoglobin, casein or Z-Phe-Arg-NHMec as substrate.. Prematurely activated/folded staphopain A is inhibited by staphostatin A (ScpB), which is probably required to protect staphylococcal cytoplasmic proteins from degradation by ScpA. Also inactivated by heavy metal ions such as Hg(2+) or Ag(+), iodoacetamide, E-64 and human plasma. Functionally, cysteine protease that plays an important role in the inhibition of host innate immune response. Cleaves host elastins found in connective tissues, pulmonary surfactant protein A in the lungs, and the chemokine receptor CXCR2 on leukocytes. Proteolytic cleavage of surfactant protein A impairs bacterial phagocytosis by neutrophils while CXCR2 degradation blocks neutrophil activation and chemotaxis. Additionally, promotes vascular leakage by activating the plasma kallikerin/kinin system, resulting in hypotension. This is Staphopain A (sspP) from Staphylococcus aureus.